The primary structure comprises 285 residues: DNA repair protein RecO (285 aa).

It belongs to the RecO family.

In terms of biological role, involved in DNA repair and RecF pathway recombination. This is DNA repair protein RecO from Synechococcus sp. (strain JA-2-3B'a(2-13)) (Cyanobacteria bacterium Yellowstone B-Prime).